Here is a 222-residue protein sequence, read N- to C-terminus: Protein Thf1 (222 aa).

Residues 169 to 208 are a coiled coil; the sequence is IEKVKRDLELYRSNLDKINQARSLMKELVEQERKRRAQQT. The interval 197 to 222 is disordered; the sequence is VEQERKRRAQQTSAPPAVDASSDAPA. Low complexity predominate over residues 209-222; the sequence is SAPPAVDASSDAPA.

This sequence belongs to the THF1 family.

Its function is as follows. May be involved in photosynthetic membrane biogenesis. The chain is Protein Thf1 from Thermosynechococcus vestitus (strain NIES-2133 / IAM M-273 / BP-1).